Consider the following 202-residue polypeptide: Dephospho-CoA kinase (202 aa).

Residues 4–201 form the DPCK domain; it reads VIGLTGGIAS…QKYLAMSKQN (198 aa). 12–17 is a binding site for ATP; the sequence is ASGKTT.

Belongs to the CoaE family.

Its subcellular location is the cytoplasm. It catalyses the reaction 3'-dephospho-CoA + ATP = ADP + CoA + H(+). It functions in the pathway cofactor biosynthesis; coenzyme A biosynthesis; CoA from (R)-pantothenate: step 5/5. Its function is as follows. Catalyzes the phosphorylation of the 3'-hydroxyl group of dephosphocoenzyme A to form coenzyme A. The protein is Dephospho-CoA kinase of Vibrio vulnificus (strain YJ016).